A 648-amino-acid chain; its full sequence is MSSTVNNGATGMPAPPDAANGFPQPGASSGSWPRAEEELRAAEPGLVKRAHREILDHERKRRVELKCMELQEMMEEQGYSEEEIRQKVGTFRQMLMEKEGVLTREDRPGAHIVAETPRRMEGLEPGLEYPPFDEDDGPVDCDCPVSCYRGHRGYRTKHWSSSSASPPPKKKKKKKGSHRRSRKKRRLESECSCGSASPLRKKKKNVKKHRRDRSDSGSRRKRRYRSRSLKSKRKEKNKERKRPHTESPGRRFHHHSSASSHSPSMSSHYSDSGSPSRLSPKHRDDGRKTGSQRSSGSRSPSPSGGSGWGSPQQNGGSRQRSGAHGGRPGSAHSPPDKPSSPRACDKAAAAPTPPARGKDSQSPRSAPSSQGRGGRAAGGTARRRRRRRRRRRSRSSANAPRRRGRRRTKPAPPRGSSRSLSGAHSSSDSGGGAPGPGPEPCSERGHGGHGKRAKERPPRARPASTSPSPGTRGRRGGPEGNSSSRSPGPHQGSWSSSRSPSKSHSRSPDKRTRSPSLSPSPKKPLGRDKDSEGRARHAEAEAARTRRRSRSYSPIRKRRRDSPSFMEPRRITSARKRPIPYYRPSPSSSSSCLSTDYSSRSHSRSPSPGHSHGSYSSRSHGTRSRSCSASRSRSPSYHSRSSSESGGF.

The segment at 1 to 44 (MSSTVNNGATGMPAPPDAANGFPQPGASSGSWPRAEEELRAAEP) is disordered. Residues 55 to 98 (LDHERKRRVELKCMELQEMMEEQGYSEEEIRQKVGTFRQMLMEK) form the CWF21 domain. The span at 99–109 (EGVLTREDRPG) shows a compositional bias: basic and acidic residues. 2 disordered regions span residues 99-139 (EGVL…DGPV) and 154-648 (YRTK…SGGF). Composition is skewed to basic residues over residues 168 to 186 (PKKKKKKKGSHRRSRKKRR), 199 to 211 (LRKKKKNVKKHRR), and 219 to 243 (RRKRRYRSRSLKSKRKEKNKERKRP). 2 stretches are compositionally biased toward low complexity: residues 257-276 (SASSHSPSMSSHYSDSGSPS) and 289-317 (TGSQRSSGSRSPSPSGGSGWGSPQQNGGS). A compositionally biased stretch (basic residues) spans 381–409 (ARRRRRRRRRRRSRSSANAPRRRGRRRTK). 3 stretches are compositionally biased toward low complexity: residues 414–428 (RGSSRSLSGAHSSSD), 461–471 (RPASTSPSPGT), and 493–502 (SWSSSRSPSK). A compositionally biased stretch (basic and acidic residues) spans 525 to 544 (LGRDKDSEGRARHAEAEAAR). Residues 545–560 (TRRRSRSYSPIRKRRR) show a composition bias toward basic residues. The span at 579-648 (IPYYRPSPSS…SRSSSESGGF (70 aa)) shows a compositional bias: low complexity.

Belongs to the CWC21 family.

May play a role in regulating breast cancer cell invasiveness. May be involved in RYBP-mediated breast cancer progression. The polypeptide is Serine/arginine repetitive matrix protein 3 (Srrm3) (Mus musculus (Mouse)).